A 371-amino-acid polypeptide reads, in one-letter code: Cytoplasmic tRNA 2-thiolation protein 1 (371 aa).

It belongs to the TtcA family. CTU1/NCS6/ATPBD3 subfamily.

The protein localises to the cytoplasm. Its pathway is tRNA modification; 5-methoxycarbonylmethyl-2-thiouridine-tRNA biosynthesis. Functionally, plays a central role in 2-thiolation of mcm(5)S(2)U at tRNA wobble positions of tRNA(Lys), tRNA(Glu) and tRNA(Gln). Directly binds tRNAs and probably acts by catalyzing adenylation of tRNAs, an intermediate required for 2-thiolation. It is unclear whether it acts as a sulfurtransferase that transfers sulfur from thiocarboxylated URM1 onto the uridine of tRNAs at wobble position. Prior mcm(5) tRNA modification by the elongator complex is required for 2-thiolation. May also be involved in protein urmylation. The chain is Cytoplasmic tRNA 2-thiolation protein 1 from Kluyveromyces lactis (strain ATCC 8585 / CBS 2359 / DSM 70799 / NBRC 1267 / NRRL Y-1140 / WM37) (Yeast).